The sequence spans 396 residues: Acetate kinase (396 aa).

Asn-8 lines the Mg(2+) pocket. Residue Lys-15 coordinates ATP. Arg-89 is a substrate binding site. Catalysis depends on Asp-146, which acts as the Proton donor/acceptor. Residues 206–210 (HLGNG), 281–283 (DLR), and 329–333 (GIGEN) each bind ATP. Glu-382 is a Mg(2+) binding site.

This sequence belongs to the acetokinase family. Homodimer. Mg(2+) is required as a cofactor. The cofactor is Mn(2+).

The protein localises to the cytoplasm. The catalysed reaction is acetate + ATP = acetyl phosphate + ADP. It functions in the pathway metabolic intermediate biosynthesis; acetyl-CoA biosynthesis; acetyl-CoA from acetate: step 1/2. Functionally, catalyzes the formation of acetyl phosphate from acetate and ATP. Can also catalyze the reverse reaction. This Geobacillus kaustophilus (strain HTA426) protein is Acetate kinase.